The following is a 267-amino-acid chain: Low affinity immunoglobulin gamma Fc region receptor III (267 aa).

The N-terminal stretch at 1-36 (MTLETQMFQNAHSGSQWLLPPLTMLLLFAFADRQTA) is a signal peptide. The Extracellular portion of the chain corresponds to 37–221 (NLPKAVVKRD…STSSLVWFHA (185 aa)). 2 Ig-like C2-type domains span residues 39–121 (PKAV…EVIS) and 122–204 (DWLL…VTIT). 2 disulfides stabilise this stretch: Cys62/Cys104 and Cys143/Cys187. 5 N-linked (GlcNAc...) asparagine glycosylation sites follow: Asn70, Asn78, Asn97, Asn171, and Asn178. The chain crosses the membrane as a helical span at residues 222-241 (AFCLVMCLLFAVDTGLYFCV). At 242 to 267 (RRNLQTSGEDWRKSLSVGKYKAPQDK) the chain is on the cytoplasmic side.

May form multisubunit complex with other heteroproteins. This association is required for efficient cell-surface expression. Does not associate with CD3 zeta. As to expression, expressed on natural killer cells and macrophages.

The protein localises to the cell membrane. Functionally, receptor for the Fc region of complexed immunoglobulins gamma. Low affinity receptor which binds to IgG1, IgG2a and IgG2b. Mediates neutrophil activation by IgG complexes redundantly with Fcgr4. In Rattus norvegicus (Rat), this protein is Low affinity immunoglobulin gamma Fc region receptor III (Fcgr3).